A 572-amino-acid polypeptide reads, in one-letter code: MHWLWKIPRLCTFWGTEMFHRTFHMNIKKLMPIQWGHQEVPAKFNFASDVIDHWASLEKAGKRSPGPALWWMNGSGEELKWNFRELSEISKQTANVLTGACGLQRGDRVAVVLPRVPEWWLVTLGCMRSGLVFMPGTTQMKSTDILYRLQSSKARAIVAGDEVVQEVDAVAPDCSFLKIKLLVSEKNREGWLNFKALLKDASPIHQCVETVSQESAAIYFTSGTSGPPKMAEHSHCSLGLKAKMDAGWTGLGPSDTMWTISDTGWILNILGSFLEPWVLGTCIFVHLLPKFDPQTVLKVLSSYPINTLLGAPLIYRMLLQQDLSSYKFPHLHSCFSGGETLLPETLESWKAKTGLEIREIYGQTETGITCRVSRTMKVKPGYLGTAIVPYDVQVIDEQGNVLPPGKEGDMALRVKPIRPIGMFSGYVDNPKKTQANIRGDFWLLGDRGIKDTEGYFHFMGRTDDIINSSGYRIGPSEVENALMEHPAVVETAVISSPDPIRREVVKAFVVLAPEFLSHDQDQLTKVLQEHVKSVTAPYKYPRKVEFVLDLPKTITGKIERAKLRAKEWKTSG.

Residues 1-46 (MHWLWKIPRLCTFWGTEMFHRTFHMNIKKLMPIQWGHQEVPAKFNF) constitute a mitochondrion transit peptide. CoA is bound at residue Gln139. ATP contacts are provided by residues 221-229 (TSGTSGPPK), 359-364 (EIYGQT), Asp446, and Arg461. Thr364 lines the substrate pocket. Residue 469 to 471 (SGY) participates in CoA binding. Arg472 contacts substrate. Residues Arg501, Lys532, and 540–542 (YPR) each bind CoA. Residue Lys557 participates in ATP binding.

The protein belongs to the ATP-dependent AMP-binding enzyme family. In terms of assembly, monomer. Requires Mg(2+) as cofactor. Mn(2+) serves as cofactor. Detected in kidney, in proximal tubules.

The protein localises to the mitochondrion. The catalysed reaction is a medium-chain fatty acid + ATP + CoA = a medium-chain fatty acyl-CoA + AMP + diphosphate. The enzyme catalyses benzoate + ATP + CoA = benzoyl-CoA + AMP + diphosphate. It carries out the reaction hexanoate + ATP + CoA = hexanoyl-CoA + AMP + diphosphate. It catalyses the reaction butanoate + ATP + CoA = butanoyl-CoA + AMP + diphosphate. The catalysed reaction is octanoate + ATP + CoA = octanoyl-CoA + AMP + diphosphate. The enzyme catalyses decanoate + ATP + CoA = decanoyl-CoA + AMP + diphosphate. Catalyzes the activation of fatty acids by CoA to produce an acyl-CoA, the first step in fatty acid metabolism. Capable of activating medium-chain fatty acids (e.g. butyric (C4) to decanoic (C10) acids), and certain carboxylate-containing xenobiotics, e.g. benzoate. In Rattus norvegicus (Rat), this protein is Acyl-coenzyme A synthetase ACSM2, mitochondrial (Acsm2).